Consider the following 825-residue polypeptide: Putative NAD(+)--arginine ADP-ribosyltransferase Mav (825 aa).

A disordered region spans residues 435–673 (ALKGLKKPPG…SGSDHHLPLH (239 aa)). Composition is skewed to pro residues over residues 443 to 457 (PGVP…PAAP) and 468 to 491 (SGKP…PLPH). Residues 560-579 (PAADTPAPSAPAASMSAASG) are compositionally biased toward low complexity. Pro residues predominate over residues 580 to 589 (PPMPPTPSLP). A compositionally biased stretch (low complexity) spans 590–599 (EPASLPSGPS). Residues 650–825 (KNANGHGPHD…GRTIIEMIER (176 aa)) form the TR mART core domain. Over residues 656–670 (GPHDASLDSGSDHHL) the composition is skewed to basic and acidic residues. Residues 687 to 699 (TGPG…FALR), 730 to 733 (RGTN), and Glu750 each bind NAD(+). Arg730 is an active-site residue. Active-site residues include Ser755 and Glu795. Glu795 lines the NAD(+) pocket.

It belongs to the Arg-specific ADP-ribosyltransferase family.

Its subcellular location is the secreted. The catalysed reaction is L-arginyl-[protein] + NAD(+) = N(omega)-(ADP-D-ribosyl)-L-arginyl-[protein] + nicotinamide + H(+). A probable mono(ADP-ribosyl)transferase, it may ADP-ribosylate Arg in target protein(s). This is Putative NAD(+)--arginine ADP-ribosyltransferase Mav from Mycobacterium avium (strain 104).